Consider the following 276-residue polypeptide: MGIIDVQRSHLTATPSKERDAPAHPPPTILPVCILFPYTSIALPVLMYYIPEKGQFDQNPFLKLIAILPPCLYSAVQFPLLFLGNPESSCTPRPALYATLYLLLDASLLAFSAISILSIAAFTTTEWNSDEVVAVCSTLLPSLLVLPAHLLSTSCALTPGSIGFTDSSVDILIDLLMVSLLAAGLTLNVDESWRFFPYICISSLVLVLAKLLRKSSSMPRRDPAPAPAWRIAAFVLIFGLSMFVYFSILYECLLIFGNHFPWFPSQAPSNDLTNKW.

Positions 1 to 24 are disordered; it reads MGIIDVQRSHLTATPSKERDAPAH.

Belongs to the UPF0328 family.

The polypeptide is UPF0328 protein ECU01_0090/ECU01_1520/ECU02_1550/ECU08_0020 (Encephalitozoon cuniculi (strain GB-M1) (Microsporidian parasite)).